The primary structure comprises 278 residues: Protoheme IX farnesyltransferase 1 (278 aa).

9 consecutive transmembrane segments (helical) span residues 12–32, 35–55, 76–96, 98–118, 129–149, 158–178, 199–221, 226–248, and 255–275; these read VIWL…GGVD, LFSL…FNHY, LITP…GISL, FLLL…FYAV, WLNI…GYAL, AVLI…ALAF, ERAV…WLYL, GAGG…YAAV, and MWKM…ALIL.

This sequence belongs to the UbiA prenyltransferase family. Protoheme IX farnesyltransferase subfamily.

Its subcellular location is the cell membrane. It catalyses the reaction heme b + (2E,6E)-farnesyl diphosphate + H2O = Fe(II)-heme o + diphosphate. Its pathway is porphyrin-containing compound metabolism; heme O biosynthesis; heme O from protoheme: step 1/1. Converts heme B (protoheme IX) to heme O by substitution of the vinyl group on carbon 2 of heme B porphyrin ring with a hydroxyethyl farnesyl side group. This Pyrobaculum aerophilum (strain ATCC 51768 / DSM 7523 / JCM 9630 / CIP 104966 / NBRC 100827 / IM2) protein is Protoheme IX farnesyltransferase 1.